A 752-amino-acid polypeptide reads, in one-letter code: Complement C2 (752 aa).

Positions 1-20 (MGPLMVLFCLLFLYPGLADS) are cleaved as a signal peptide. 3 Sushi domains span residues 22 to 86 (PSCP…VCKP), 87 to 146 (VRCP…VCDN), and 149 to 206 (GHCP…ICRQ). 6 cysteine pairs are disulfide-bonded: C24–C64, C51–C84, C89–C131, C117–C144, C151–C191, and C177–C204. N-linked (GlcNAc...) asparagine glycosylation occurs at N29. A glycan (N-linked (GlcNAc...) asparagine) is linked at N112. Positions 254–452 (NLYLLLDCSQ…KALHQVFEHM (199 aa)) constitute a VWFA domain. The short motif at 260–264 (DCSQS) is the MIDAS-like motif element. 2 residues coordinate Mg(2+): S262 and S264. 2 N-linked (GlcNAc...) asparagine glycosylation sites follow: N290 and N333. T337 contacts Mg(2+). Intrachain disulfides connect C463-C581, C492-C508, and C584-C600. One can recognise a Peptidase S1 domain in the interval 464 to 744 (GVGNMSANAS…MQPWLRQHLG (281 aa)). N467 and N471 each carry an N-linked (GlcNAc...) asparagine glycan. Residues H507 and D561 each act as charge relay system in the active site. Residue N621 is glycosylated (N-linked (GlcNAc...) asparagine). Intrachain disulfides connect C638/C665 and C675/C705. Catalysis depends on S679, which acts as the Charge relay system.

Belongs to the peptidase S1 family. As to quaternary structure, serine protease component of the C3 convertase, also named C4bC2b, composed of the serine protease complement C2b and complement C4b. Serine protease component of the C5 convertase, also named C4bC2bC3b, composed of the serine protease complement C2b, complement C3b, as well as complement C4b. It depends on Mg(2+) as a cofactor. Mn(2+) is required as a cofactor. Cleaved and activated by different proteases depending on the complement pathway to generate complement C2a and serine protease complement C2b chains. Cleaved and activated by C1S following activation by the classical complement system. Cleaved and activated by MASP2 following activation by the lectin complement system. Cleaved and activated by GZMK following activation by the GZMK complement system.

It localises to the secreted. The protein resides in the cell surface. The enzyme catalyses Selective cleavage of Arg-|-Ser bond in complement component C3 alpha-chain to form C3a and C3b, and Arg-|-Xaa bond in complement component C5 alpha-chain to form C5a and C5b.. Functionally, precursor of the catalytic component of the C3 and C5 convertase complexes, which are part of the complement pathway, a cascade of proteins that leads to phagocytosis and breakdown of pathogens and signaling that strengthens the adaptive immune system. Component C2 is part of the classical, lectin and GZMK complement systems. Its function is as follows. Catalytic component of the complement C3 and C5 convertase complexes. Following complement activation, recruited to the surface of pathogens by complement C4b opsonin to form the C3 convertase, or C3b and C4b opsonins to form the C5 convertase. As part of the C3 convertase, cleaves and activate C3 into C3a anaphylatoxin and C3b opsonin, the next components of the complement pathways. As part of the C5 convertase, cleaves and activate C5 into C5a anaphylatoxin and C5b component of the membrane attack complex. The protein is Complement C2 of Pongo pygmaeus (Bornean orangutan).